Consider the following 429-residue polypeptide: UDP-N-acetylglucosamine 1-carboxyvinyltransferase (429 aa).

Residue 22-23 participates in phosphoenolpyruvate binding; sequence KN. Arg-102 is a binding site for UDP-N-acetyl-alpha-D-glucosamine. Cys-126 serves as the catalytic Proton donor. At Cys-126 the chain carries 2-(S-cysteinyl)pyruvic acid O-phosphothioketal. Residues 131 to 135, 171 to 174, Asp-316, and Ile-338 contribute to the UDP-N-acetyl-alpha-D-glucosamine site; these read RPVDL and KVSV.

The protein belongs to the EPSP synthase family. MurA subfamily.

It is found in the cytoplasm. The catalysed reaction is phosphoenolpyruvate + UDP-N-acetyl-alpha-D-glucosamine = UDP-N-acetyl-3-O-(1-carboxyvinyl)-alpha-D-glucosamine + phosphate. The protein operates within cell wall biogenesis; peptidoglycan biosynthesis. Functionally, cell wall formation. Adds enolpyruvyl to UDP-N-acetylglucosamine. This is UDP-N-acetylglucosamine 1-carboxyvinyltransferase from Chelativorans sp. (strain BNC1).